The following is a 967-amino-acid chain: Vacuolar membrane protease (967 aa).

Residues 1-16 (MARPSLSRSNPLGFTP) are Cytoplasmic-facing. The chain crosses the membrane as a helical span at residues 17 to 37 (WPVTVITAVVYLALVVPLLVV). Residues 38–387 (HHVVPSAPSS…SAFVVFELHT (350 aa)) are Vacuolar-facing. N-linked (GlcNAc...) asparagine glycosylation is found at N53 and N119. Zn(2+)-binding residues include H171 and D183. E217 acts as the Proton acceptor in catalysis. Zn(2+)-binding residues include E218, E243, and H316. Residues 388–408 (LFALSVTLLVVAPLVLLVTSI) form a helical membrane-spanning segment. At 409–441 (ALNRADKMYLFRASASPEDSDGSEAVLLHGVRG) the chain is on the cytoplasmic side. The helical transmembrane segment at 442-462 (FFRFPFLLVIPTAVTVGLAYL) threads the bilayer. Residues 463–472 (VTKFNPYIIH) are Vacuolar-facing. Residues 473–493 (SSEYAVWSMMISAWVFLAWFV) traverse the membrane as a helical segment. Residues 494–507 (SRVADFARPSAFHR) lie on the Cytoplasmic side of the membrane. The helical transmembrane segment at 508 to 528 (VYTLTWLFLVEWVLLVISTVY) threads the bilayer. Residues 529–532 (ENKY) are Vacuolar-facing. A helical membrane pass occupies residues 533–553 (GLAGGYFVFFAFAGTFLATWI). The Cytoplasmic portion of the chain corresponds to 554 to 663 (SYLELFALPR…WSIHLPKWVW (110 aa)). Residues 579 to 612 (SSHGSRLGTASGEDVEDGEDEDEDDDGTTAEATE) are disordered. The span at 591–606 (EDVEDGEDEDEDDDGT) shows a compositional bias: acidic residues. The chain crosses the membrane as a helical span at residues 664–684 (VLQFLLTAPLVLTFVGPLALL). Residues 685–700 (LTSALRQTGQDGSSSL) are Vacuolar-facing. A helical membrane pass occupies residues 701–721 (FIYIAVAALTTLLFIPLLPFI). The Cytoplasmic segment spans residues 722–727 (HRYTHH). The helical transmembrane segment at 728-748 (IPLFLLCVFAGTLIYNLVAFP) threads the bilayer. Residues 749-967 (FSPANRLKLF…LVEGSRRFEI (219 aa)) are Vacuolar-facing. Residues N795 and N832 are each glycosylated (N-linked (GlcNAc...) asparagine).

The protein belongs to the peptidase M28 family. The cofactor is Zn(2+).

It is found in the vacuole membrane. May be involved in vacuolar sorting and osmoregulation. This Neosartorya fischeri (strain ATCC 1020 / DSM 3700 / CBS 544.65 / FGSC A1164 / JCM 1740 / NRRL 181 / WB 181) (Aspergillus fischerianus) protein is Vacuolar membrane protease.